The sequence spans 303 residues: 2-dehydropantoate 2-reductase (303 aa).

NADP(+)-binding positions include 7–12 (GAGSLG), Arg35, Asn103, Ala129, and Arg131. Asn103 contributes to the substrate binding site. Lys182 serves as the catalytic Proton donor. The substrate site is built by Asn186, Asn190, Asn200, and Ser250. Glu262 contacts NADP(+).

It belongs to the ketopantoate reductase family.

It localises to the cytoplasm. The enzyme catalyses (R)-pantoate + NADP(+) = 2-dehydropantoate + NADPH + H(+). The protein operates within cofactor biosynthesis; (R)-pantothenate biosynthesis; (R)-pantoate from 3-methyl-2-oxobutanoate: step 2/2. Its function is as follows. Catalyzes the NADPH-dependent reduction of ketopantoate into pantoic acid. This is 2-dehydropantoate 2-reductase (panE) from Pseudomonas aeruginosa (strain ATCC 15692 / DSM 22644 / CIP 104116 / JCM 14847 / LMG 12228 / 1C / PRS 101 / PAO1).